Reading from the N-terminus, the 1222-residue chain is ATP-dependent helicase/nuclease subunit A (1222 aa).

Residues 39–495 (QKRTAQQIEA…ILLKENFRSQ (457 aa)) enclose the UvrD-like helicase ATP-binding domain. 60–67 (ASAGSGKT) provides a ligand contact to ATP. The UvrD-like helicase C-terminal domain occupies 524–810 (QLIAGSHAQT…NLMTIHKSKG (287 aa)).

The protein belongs to the helicase family. AddA subfamily. As to quaternary structure, heterodimer of AddA and AddB/RexB. Requires Mg(2+) as cofactor.

The enzyme catalyses Couples ATP hydrolysis with the unwinding of duplex DNA by translocating in the 3'-5' direction.. It catalyses the reaction ATP + H2O = ADP + phosphate + H(+). Functionally, the heterodimer acts as both an ATP-dependent DNA helicase and an ATP-dependent, dual-direction single-stranded exonuclease. Recognizes the chi site generating a DNA molecule suitable for the initiation of homologous recombination. The AddA nuclease domain is required for chi fragment generation; this subunit has the helicase and 3' -&gt; 5' nuclease activities. The chain is ATP-dependent helicase/nuclease subunit A from Streptococcus pyogenes serotype M6 (strain ATCC BAA-946 / MGAS10394).